The sequence spans 152 residues: D-erythrulose-4-phosphate isomerase (152 aa).

Cys-67 acts as the Proton acceptor in catalysis.

This sequence belongs to the LacAB/RpiB family.

The enzyme catalyses D-erythrulose 4-phosphate = D-erythrose 4-phosphate. It participates in carbohydrate metabolism. Involved in catabolism of D-apiose. Catalyzes the isomerization of D-erythrulose 4-phosphate to D-erythrose 4-phosphate. The chain is D-erythrulose-4-phosphate isomerase from Pectobacterium atrosepticum (strain SCRI 1043 / ATCC BAA-672) (Erwinia carotovora subsp. atroseptica).